Consider the following 504-residue polypeptide: Dihydrolipoamide dehydrogenase (504 aa).

Residues 1-34 (MLSQRLIGRTAVKSAFRPSGLPTVVNASRWRRGY) constitute a mitochondrion transit peptide. FAD is bound by residues 69–78 (EKRGTLGGTC), K87, G151, and 180–182 (TGS). An intrachain disulfide couples C78 to C83. Residues 217–224 (GGGIIGLE), E240, V275, and G310 contribute to the NAD(+) site. FAD contacts are provided by residues D351 and 357-360 (MLAH). H483 acts as the Proton acceptor in catalysis.

It belongs to the class-I pyridine nucleotide-disulfide oxidoreductase family. Eukaryotic pyruvate dehydrogenase (PDH) complexes are organized as a core consisting of the oligomeric dihydrolipoamide acetyl-transferase (E2), around which are arranged multiple copies of pyruvate dehydrogenase (E1), dihydrolipoamide dehydrogenase (E3) and protein X (E3BP) bound by non-covalent bonds. The Chaetomium thermophilum PDH complex contains 60 E2 units, 12 E3BP units, about 20 E1 units, and 12 or more E3 units. The units are organized in 1 E2 60-mer, 4 E3BP trimers, about 20 E1 tetramers, and a maximum of 12 E3 dimers. The E3BP trimers are bound inside the icosahedral core with tetrahedral symmetry. The cofactor is FAD.

Its subcellular location is the mitochondrion. It carries out the reaction N(6)-[(R)-dihydrolipoyl]-L-lysyl-[protein] + NAD(+) = N(6)-[(R)-lipoyl]-L-lysyl-[protein] + NADH + H(+). Functionally, lipoamide dehydrogenase is a component of the alpha-ketoacid dehydrogenase complexes. This includes the pyruvate dehydrogenase complex, which catalyzes the overall conversion of pyruvate to acetyl-CoA and CO(2). Also acts as a component of the glycine cleavage system (glycine decarboxylase complex), which catalyzes the degradation of glycine. The 10-megadalton pyruvate dehydrogenase complex contains multiple copies of three enzymatic components: pyruvate dehydrogenase (E1), dihydrolipoamide acetyltransferase (E2) and lipoamide dehydrogenase (E3) and catalyzes the overall oxidative decarboxylation of pyruvate to form acetyl-CoA and CO(2). Within the complex, pyruvate and thiamine pyrophosphate (TPP or vitamin B1) are bound by pyruvate dehydrogenase E1 subunits alpha and beta and pyruvate is decarboxylated leading to the 2-carbon hydrohyethyl bound to TPP. The E2 component contains covalently-bound lipoyl cofactors and transfers the hydroxyethyl group from TPP to an oxidized form of covalently bound lipoamide, and the resulting acetyl group is then transferred to free coenzyme A to form acetyl-CoA and reduced dihydrolipoamide-E2. Finally, the flavoprotein dihydrolipoamide dehydrogenase (E3) re-oxidizes the lipoyl group of dihydrolipoamide-E2 to form lipoamide-E2 and NADH. A fourth subunit, E3BP, is responsible for tethering E3 in proximity to the core, forming the entire metabolon. This chain is Dihydrolipoamide dehydrogenase, found in Chaetomium thermophilum (strain DSM 1495 / CBS 144.50 / IMI 039719) (Thermochaetoides thermophila).